We begin with the raw amino-acid sequence, 326 residues long: Vitamin B12 import system permease protein BtuC (326 aa).

The next 9 helical transmembrane spans lie at 15 to 35 (WLLCLSVLMLLALLLSLCAGE), 61 to 81 (LAVLLVGAALAISGAVMQALF), 88 to 108 (PGLLGVSNGAGVGLIAAVLLG), 112 to 132 (LPNWALGLCAIAGALIITLIL), 146 to 166 (LLAGVALGIICSALMTWAIYF), 184 to 204 (GGVDWRQSWLMLALIPVLLWI), 240 to 260 (GWMVGVSVALAGAIGFIGLVI), 274 to 294 (VLLPGCALAGASALLLADIVA), and 302 to 322 (ELPIGVVTATLGAPVFIWLLL).

The protein belongs to the binding-protein-dependent transport system permease family. FecCD subfamily. The complex is composed of two ATP-binding proteins (BtuD), two transmembrane proteins (BtuC) and a solute-binding protein (BtuF).

The protein localises to the cell inner membrane. Its function is as follows. Part of the ABC transporter complex BtuCDF involved in vitamin B12 import. Involved in the translocation of the substrate across the membrane. This chain is Vitamin B12 import system permease protein BtuC, found in Escherichia coli O7:K1 (strain IAI39 / ExPEC).